The chain runs to 129 residues: Chorion class A protein L11 (129 aa).

Residues 1–21 form the signal peptide; sequence MSTFAFLLLCVQACLIQNVYG. The left arm stretch occupies residues 22-64; the sequence is QCLGRGLGGCGCGGGLGGYGLGYGLGGYGGGYGYGGYGGGYYG. Residues 65–112 form a central domain region; the sequence is GYGGEGVGNVGVAGVLPVGGVTAVGGRVPIIGGVEFGGPACAGGCVSI. A right arm region spans residues 113–129; that stretch reads CGHCAPTCGCGYGGLYY.

The protein belongs to the chorion protein family.

This protein is one of many from the eggshell of the silk moth. The protein is Chorion class A protein L11 of Bombyx mori (Silk moth).